Reading from the N-terminus, the 146-residue chain is Large ribosomal subunit protein uL15 (146 aa).

The disordered stretch occupies residues 1–56 (MSDIQLNTLKPAEGSKHAKRRVGRGIGSGLGKTAGRGHKGQKSRSGGFHKVGFEGG). Over residues 24–34 (RGIGSGLGKTA) the composition is skewed to gly residues.

Belongs to the universal ribosomal protein uL15 family. Part of the 50S ribosomal subunit.

Binds to the 23S rRNA. In Bordetella bronchiseptica (strain ATCC BAA-588 / NCTC 13252 / RB50) (Alcaligenes bronchisepticus), this protein is Large ribosomal subunit protein uL15.